A 197-amino-acid chain; its full sequence is Probable GTP-binding protein EngB (197 aa).

The 173-residue stretch at 25–197 folds into the EngB-type G domain; the sequence is SAPEIAFAGR…VRDEFFKFTR (173 aa). GTP contacts are provided by residues 33–40, 60–64, 79–82, 146–149, and 177–179; these read GRSNVGKS, GCTRQ, DLPG, TKID, and ISI. Mg(2+) is bound by residues Ser-40 and Thr-62.

The protein belongs to the TRAFAC class TrmE-Era-EngA-EngB-Septin-like GTPase superfamily. EngB GTPase family. Mg(2+) serves as cofactor.

In terms of biological role, necessary for normal cell division and for the maintenance of normal septation. The polypeptide is Probable GTP-binding protein EngB (Wolbachia pipientis subsp. Culex pipiens (strain wPip)).